A 372-amino-acid chain; its full sequence is Germination protease (372 aa).

Positions 1 to 15 (MNRSIDLSMYSVRTD) are excised as a propeptide.

This sequence belongs to the peptidase A25 family. In terms of assembly, homotetramer. Autoproteolytically processed. The inactive tetrameric zymogen termed p46 autoprocesses to a smaller form termed p41, which is active only during spore germination.

It catalyses the reaction Endopeptidase action with P4 Glu or Asp, P1 preferably Glu &gt; Asp, P1' hydrophobic and P2' Ala.. Its function is as follows. Initiates the rapid degradation of small, acid-soluble proteins during spore germination. The protein is Germination protease of Geobacillus sp. (strain WCH70).